A 943-amino-acid chain; its full sequence is MSNSHLGTLCFIISLLGLANFSLSQTGLDDSTMQSLKSSLNLTSDVDWSNPNPCKWQSVQCDGSNRVTKIQLKQKGIRGTLPTNLQSLSELVILELFLNRISGPIPDLSGLSRLQTLNLHDNLFTSVPKNLFSGMSSLQEMYLENNPFDPWVIPDTVKEATSLQNLTLSNCSIIGKIPDFFGSQSLPSLTNLKLSQNGLEGELPMSFAGTSIQSLFLNGQKLNGSISVLGNMTSLVEVSLQGNQFSGPIPDLSGLVSLRVFNVRENQLTGVVPQSLVSLSSLTTVNLTNNYLQGPTPLFGKSVGVDIVNNMNSFCTNVAGEACDPRVDTLVSVAESFGYPVKLAESWKGNNPCVNWVGITCSGGNITVVNMRKQDLSGTISPSLAKLTSLETINLADNKLSGHIPDELTTLSKLRLLDVSNNDFYGIPPKFRDTVTLVTEGNANMGKNGPNKTSDAPGASPGSKPSGGSDGSETSKKSSNVKIIVPVVGGVVGALCLVGLGVCLYAKKRKRPARVQSPSSNMVIHPHHSGDNDDIKLTVAASSLNSGGGSDSYSHSGSAASDIHVVEAGNLVISIQVLRNVTNNFSEENILGRGGFGTVYKGELHDGTKIAVKRMESSVVSDKGLTEFKSEITVLTKMRHRHLVALLGYCLDGNERLLVYEYMPQGTLSQHLFHWKEEGRKPLDWTRRLAIALDVARGVEYLHTLAHQSFIHRDLKPSNILLGDDMRAKVSDFGLVRLAPDGKYSIETRVAGTFGYLAPEYAVTGRVTTKVDIFSLGVILMELITGRKALDETQPEDSVHLVTWFRRVAASKDENAFKNAIDPNISLDDDTVASIEKVWELAGHCCAREPYQRPDMAHIVNVLSSLTVQWKPTETDPDDVYGIDYDMPLPQVLKKWQAFEGLSQTADDSGSSSSAYGSKDNTQTSIPTRPSGFADSFTSVDGR.

Residues 1–24 form the signal peptide; that stretch reads MSNSHLGTLCFIISLLGLANFSLS. The Extracellular segment spans residues 25–482; the sequence is QTGLDDSTMQ…ETSKKSSNVK (458 aa). Asn-41 carries an N-linked (GlcNAc...) asparagine glycan. Cys-54 and Cys-61 are oxidised to a cystine. 10 LRR repeats span residues 64 to 88, 89 to 111, 112 to 134, 136 to 160, 162 to 183, 186 to 210, 212 to 232, 233 to 254, 255 to 279, and 281 to 301; these read SNRV…LQSL, SELV…LSGL, SRLQ…LFSG, SSLQ…VKEA, SLQN…FFGS, LPSL…FAGT, IQSL…LGNM, TSLV…DLSG, LVSL…LVSL, and SLTT…LFGK. 2 N-linked (GlcNAc...) asparagine glycosylation sites follow: Asn-165 and Asn-170. N-linked (GlcNAc...) asparagine glycosylation is found at Asn-223 and Asn-231. Asn-286 is a glycosylation site (N-linked (GlcNAc...) asparagine). 2 cysteine pairs are disulfide-bonded: Cys-315-Cys-323 and Cys-353-Cys-361. 3 LRR repeats span residues 363–386, 387–410, and 411–438; these read GGNI…SLAK, LTSL…ELTT, and LSKL…VTLV. A glycan (N-linked (GlcNAc...) asparagine) is linked at Asn-365. A disordered region spans residues 441–476; the sequence is GNANMGKNGPNKTSDAPGASPGSKPSGGSDGSETSK. Asn-451 is a glycosylation site (N-linked (GlcNAc...) asparagine). A compositionally biased stretch (low complexity) spans 454–467; the sequence is SDAPGASPGSKPSG. A helical membrane pass occupies residues 483–503; the sequence is IIVPVVGGVVGALCLVGLGVC. The Cytoplasmic portion of the chain corresponds to 504-943; sequence LYAKKRKRPA…ADSFTSVDGR (440 aa). The disordered stretch occupies residues 514–534; sequence RVQSPSSNMVIHPHHSGDNDD. The 282-residue stretch at 585–866 folds into the Protein kinase domain; it reads FSEENILGRG…AHIVNVLSSL (282 aa). Residues 591–599 and Lys-613 each bind ATP; that span reads LGRGGFGTV. Catalysis depends on Asp-714, which acts as the Proton acceptor. The tract at residues 904–943 is disordered; that stretch reads QTADDSGSSSSAYGSKDNTQTSIPTRPSGFADSFTSVDGR. Low complexity predominate over residues 906 to 918; sequence ADDSGSSSSAYGS. Over residues 919-928 the composition is skewed to polar residues; that stretch reads KDNTQTSIPT.

This sequence belongs to the protein kinase superfamily. Ser/Thr protein kinase family. As to expression, expressed in roots, leaves, stems, siliques and flowers.

Its subcellular location is the membrane. It catalyses the reaction L-seryl-[protein] + ATP = O-phospho-L-seryl-[protein] + ADP + H(+). The enzyme catalyses L-threonyl-[protein] + ATP = O-phospho-L-threonyl-[protein] + ADP + H(+). Its function is as follows. Involved in auxin signal transduction and cell expansion and proliferation regulation. The chain is Receptor-like kinase TMK3 from Arabidopsis thaliana (Mouse-ear cress).